Consider the following 443-residue polypeptide: Phosphoglucosamine mutase (443 aa).

Residue Ser101 is the Phosphoserine intermediate of the active site. The Mg(2+) site is built by Ser101, Asp240, Asp242, and Asp244. The residue at position 101 (Ser101) is a Phosphoserine.

This sequence belongs to the phosphohexose mutase family. Mg(2+) is required as a cofactor. Post-translationally, activated by phosphorylation.

The enzyme catalyses alpha-D-glucosamine 1-phosphate = D-glucosamine 6-phosphate. Functionally, catalyzes the conversion of glucosamine-6-phosphate to glucosamine-1-phosphate. This Psychromonas ingrahamii (strain DSM 17664 / CCUG 51855 / 37) protein is Phosphoglucosamine mutase.